The sequence spans 249 residues: 4-hydroxy-tetrahydrodipicolinate reductase (249 aa).

Residues 77–79 (ATT) and 101–104 (SYNT) each bind NAD(+). The active-site Proton donor/acceptor is His133. Position 134 (His134) interacts with (S)-2,3,4,5-tetrahydrodipicolinate. Lys137 (proton donor) is an active-site residue. (S)-2,3,4,5-tetrahydrodipicolinate is bound at residue 143–144 (GT).

Belongs to the DapB family.

Its subcellular location is the cytoplasm. The catalysed reaction is (S)-2,3,4,5-tetrahydrodipicolinate + NAD(+) + H2O = (2S,4S)-4-hydroxy-2,3,4,5-tetrahydrodipicolinate + NADH + H(+). It carries out the reaction (S)-2,3,4,5-tetrahydrodipicolinate + NADP(+) + H2O = (2S,4S)-4-hydroxy-2,3,4,5-tetrahydrodipicolinate + NADPH + H(+). It participates in amino-acid biosynthesis; L-lysine biosynthesis via DAP pathway; (S)-tetrahydrodipicolinate from L-aspartate: step 4/4. Its function is as follows. Catalyzes the conversion of 4-hydroxy-tetrahydrodipicolinate (HTPA) to tetrahydrodipicolinate. The protein is 4-hydroxy-tetrahydrodipicolinate reductase of Exiguobacterium sp. (strain ATCC BAA-1283 / AT1b).